The primary structure comprises 339 residues: Heat-inducible transcription repressor HrcA (339 aa).

Belongs to the HrcA family.

Functionally, negative regulator of class I heat shock genes (grpE-dnaK-dnaJ and groELS operons). Prevents heat-shock induction of these operons. The sequence is that of Heat-inducible transcription repressor HrcA from Leifsonia xyli subsp. xyli (strain CTCB07).